The following is a 543-amino-acid chain: MSPTKTQNSAEENIRAELGLSAEVVTIRRNAPAALLYEDALKERDTAISNAGALIAYSGDKTGRSPRDKRIVEEETSKDNVWWGPVNKPCSERTWEINRERAADYLRTRDHIYIVDAYAGWDPRYRIKVRVVCARAYHALFMTNMLIRPSKEELENFGEPDFTVWNAGQFPANTHTSGMTSKTTVEINFKQMEMVILGTEYAGEMKKGIFTVMFYLMPVNHNVLTLHSSANQGIQDNDVTLFFGLSGTGKTTLSADPHRLLIGDDEHCWSDHGVFNIEGGCYAKCLGLSAEKEPEIFNAIKFGSVLENIIYDPNTREVDYEDSTITENTRCAYPIEYIPSAKIPCLADHHPKNIVLLTCDASGVLPPVSKLTPDQVMYHFISGYTSKMAGTEQGVTEPEATFSSCFGQPFLSLHPMKYATMLAEKMAEHNANAWLINTGWTGSSYVAGGKRCPLKYTRAILDAIHDGSLAKEEYEVLPIFNLQIPKAVGDKVPASLLNPSKNWAEGEAKYTSNVKSLANLFVENFKTYQDKATEQVLAAGPQL.

Residue 244 to 251 (GLSGTGKT) coordinates ATP.

Belongs to the phosphoenolpyruvate carboxykinase (ATP) family.

It catalyses the reaction oxaloacetate + ATP = phosphoenolpyruvate + ADP + CO2. Its pathway is carbohydrate biosynthesis; gluconeogenesis. The protein is Phosphoenolpyruvate carboxykinase (ATP) (PCK1) of Kluyveromyces lactis (strain ATCC 8585 / CBS 2359 / DSM 70799 / NBRC 1267 / NRRL Y-1140 / WM37) (Yeast).